The sequence spans 475 residues: Putative aldehyde dehydrogenase SERP1729 (475 aa).

Residue 201–207 coordinates NAD(+); it reads GDGSGVG. Catalysis depends on residues Glu-245 and Cys-279.

It belongs to the aldehyde dehydrogenase family.

It catalyses the reaction an aldehyde + NAD(+) + H2O = a carboxylate + NADH + 2 H(+). The protein is Putative aldehyde dehydrogenase SERP1729 of Staphylococcus epidermidis (strain ATCC 35984 / DSM 28319 / BCRC 17069 / CCUG 31568 / BM 3577 / RP62A).